A 148-amino-acid chain; its full sequence is Lysozyme C, non-stomach isozyme (148 aa).

Residues 1–18 (MKALLILGLLLFSVAVQG) form the signal peptide. The 130-residue stretch at 19-148 (KVFERCELAR…LTSYIQGCGV (130 aa)) folds into the C-type lysozyme domain. 4 disulfides stabilise this stretch: Cys24–Cys146, Cys48–Cys134, Cys83–Cys99, and Cys95–Cys113. Active-site residues include Glu53 and Asp71.

It belongs to the glycosyl hydrolase 22 family. As to expression, expressed in blood cells.

The catalysed reaction is Hydrolysis of (1-&gt;4)-beta-linkages between N-acetylmuramic acid and N-acetyl-D-glucosamine residues in a peptidoglycan and between N-acetyl-D-glucosamine residues in chitodextrins.. Functionally, lysozymes have primarily a bacteriolytic function; those in tissues and body fluids are associated with the monocyte-macrophage system and enhance the activity of immunoagents. This Bos taurus (Bovine) protein is Lysozyme C, non-stomach isozyme (LYS).